The chain runs to 405 residues: CRS2-associated factor 1, mitochondrial (405 aa).

The N-terminal 20 residues, 1–20, are a transit peptide targeting the mitochondrion; it reads MFLIRLSRHNPSSFTLLTRR. Positions 32 to 75 are disordered; the sequence is RDLYNFQSPPPLSSSASENPDFNQKNNNKKKPKPQYRPPSSLEG. CRM domains lie at 157 to 255 and 277 to 373; these read ASLT…KRPK and DGLS…KEDD. The segment at 384–405 is disordered; the sequence is SIDSDVDLSCSRGAQDSPDETT.

As to quaternary structure, part of large ribonucleo-protein complexes that include group IIB introns.

It is found in the mitochondrion. Its function is as follows. May be involved in the splicing of group IIB introns in mitochondria. The protein is CRS2-associated factor 1, mitochondrial of Arabidopsis thaliana (Mouse-ear cress).